Here is a 1057-residue protein sequence, read N- to C-terminus: Carbamoyl phosphate synthase large chain (1057 aa).

A carboxyphosphate synthetic domain region spans residues 1–401 (MPKRDDIKTI…SLLKAIRSLE (401 aa)). ATP is bound by residues Arg-129, Arg-169, Gly-175, Gly-176, Lys-208, Ile-210, Glu-215, Gly-241, Ile-242, His-243, Gln-284, and Glu-298. The ATP-grasp 1 domain occupies 133–327 (RTLMNDLNVP…IAKLAAKIAV (195 aa)). Mg(2+)-binding residues include Gln-284, Glu-298, and Asn-300. Positions 284, 298, and 300 each coordinate Mn(2+). Residues 402-546 (YGVHHLGLSN…YGTYEYENES (145 aa)) are oligomerization domain. The segment at 547 to 929 (IVTDKEKILV…ALYKGLTGSG (383 aa)) is carbamoyl phosphate synthetic domain. In terms of domain architecture, ATP-grasp 2 spans 671 to 861 (EALLREIAVP…MAQLAMRAIM (191 aa)). Residues Arg-707, Arg-746, Leu-748, Glu-752, Gly-777, Val-778, His-779, Ser-780, Gln-820, and Glu-832 each coordinate ATP. Residues Gln-820, Glu-832, and Asn-834 each coordinate Mg(2+). Positions 820, 832, and 834 each coordinate Mn(2+). The MGS-like domain maps to 930–1057 (FEVKDHGTVL…ESMTFTMRNV (128 aa)). The segment at 930–1057 (FEVKDHGTVL…ESMTFTMRNV (128 aa)) is allosteric domain.

Belongs to the CarB family. In terms of assembly, composed of two chains; the small (or glutamine) chain promotes the hydrolysis of glutamine to ammonia, which is used by the large (or ammonia) chain to synthesize carbamoyl phosphate. Tetramer of heterodimers (alpha,beta)4. It depends on Mg(2+) as a cofactor. Requires Mn(2+) as cofactor.

It carries out the reaction hydrogencarbonate + L-glutamine + 2 ATP + H2O = carbamoyl phosphate + L-glutamate + 2 ADP + phosphate + 2 H(+). The enzyme catalyses hydrogencarbonate + NH4(+) + 2 ATP = carbamoyl phosphate + 2 ADP + phosphate + 2 H(+). It functions in the pathway amino-acid biosynthesis; L-arginine biosynthesis; carbamoyl phosphate from bicarbonate: step 1/1. The protein operates within pyrimidine metabolism; UMP biosynthesis via de novo pathway; (S)-dihydroorotate from bicarbonate: step 1/3. In terms of biological role, large subunit of the glutamine-dependent carbamoyl phosphate synthetase (CPSase). CPSase catalyzes the formation of carbamoyl phosphate from the ammonia moiety of glutamine, carbonate, and phosphate donated by ATP, constituting the first step of 2 biosynthetic pathways, one leading to arginine and/or urea and the other to pyrimidine nucleotides. The large subunit (synthetase) binds the substrates ammonia (free or transferred from glutamine from the small subunit), hydrogencarbonate and ATP and carries out an ATP-coupled ligase reaction, activating hydrogencarbonate by forming carboxy phosphate which reacts with ammonia to form carbamoyl phosphate. This is Carbamoyl phosphate synthase large chain from Staphylococcus epidermidis (strain ATCC 12228 / FDA PCI 1200).